A 233-amino-acid polypeptide reads, in one-letter code: Glycerol-3-phosphate acyltransferase (233 aa).

5 consecutive transmembrane segments (helical) span residues 7 to 27 (WIIIAIICSYLIGAIPFGYII), 94 to 114 (ISIVFGAAAAIGHIKSIYIGF), 127 to 147 (VIAINPIIGLSGIGLFFIVAF), 153 to 173 (SIGSVVASFSVAVMMWIGVLI), and 185 to 205 (ISYESQIINLVAISLIVLLII).

Belongs to the PlsY family. As to quaternary structure, probably interacts with PlsX.

The protein localises to the cell membrane. The enzyme catalyses an acyl phosphate + sn-glycerol 3-phosphate = a 1-acyl-sn-glycero-3-phosphate + phosphate. Its pathway is lipid metabolism; phospholipid metabolism. Functionally, catalyzes the transfer of an acyl group from acyl-phosphate (acyl-PO(4)) to glycerol-3-phosphate (G3P) to form lysophosphatidic acid (LPA). This enzyme utilizes acyl-phosphate as fatty acyl donor, but not acyl-CoA or acyl-ACP. In Acholeplasma laidlawii, this protein is Glycerol-3-phosphate acyltransferase.